Here is a 130-residue protein sequence, read N- to C-terminus: Small ribosomal subunit protein uS9 (130 aa).

It belongs to the universal ribosomal protein uS9 family.

The sequence is that of Small ribosomal subunit protein uS9 from Stutzerimonas stutzeri (strain A1501) (Pseudomonas stutzeri).